The chain runs to 872 residues: FHIP family protein CBG19667 (872 aa).

Residues 800–841 form a disordered region; the sequence is SRSSPRSADEHDSTLFYGRSTIPPPGRKPLLREPSHQETLDD. Residues 829–841 are compositionally biased toward basic and acidic residues; the sequence is LLREPSHQETLDD.

This sequence belongs to the FHIP family.

This chain is FHIP family protein CBG19667, found in Caenorhabditis briggsae.